Reading from the N-terminus, the 367-residue chain is DNA-directed RNA polymerase II subunit GRINL1A (367 aa).

The stretch at 15–40 forms a coiled coil; that stretch reads DLERRSLAELREMLKRQERLLRNEKF. The tract at residues 29–68 is important for transcription repressor activity; that stretch reads KRQERLLRNEKFICKLPDKGKKIFDSFAKLKAAIAECEEV. Composition is skewed to polar residues over residues 117–131, 176–185, and 205–225; these read SVDN…QNQG, RVSSQAEDTS, and GEQQ…SGTQ. Disordered stretches follow at residues 117 to 185, 203 to 225, and 254 to 281; these read SVDN…EDTS, DQGE…SGTQ, and PFRQ…RRDK. Residues 226–297 form an interaction with Pol II region; it reads KKPHYMEVLE…TAARLLPLHH (72 aa). Residue Ser269 is modified to Phosphoserine. Positions 298-313 are important for transcription repressor activity; it reads MPTQLLSIEESLALQK. A coiled-coil region spans residues 300-329; sequence TQLLSIEESLALQKQRKQKYEEMQAKLAAQ. The tract at residues 314 to 339 is interaction with Pol II; sequence QRKQKYEEMQAKLAAQKLAERLNIKM. The interval 335–367 is disordered; the sequence is LNIKMRSYNPEGESSGRYREVRDEDDDWSSDEF. The span at 357–367 shows a compositional bias: acidic residues; sequence DEDDDWSSDEF.

This sequence belongs to the GRINL1 family. In terms of assembly, component of the Pol II(G) complex, which contains the RNA polymerase II (Pol II) core complex subunits and POLR2M isoform 1. Pol II(G) appears to be an abundant form of Pol II. Dephosphorylated at Ser-269 by the PNUTS-PP1 complex, promoting RNA polymerase II transcription pause-release.

Its subcellular location is the nucleus. Its function is as follows. Appears to be a stable component of the Pol II(G) complex form of RNA polymerase II (Pol II). Pol II synthesizes mRNA precursors and many functional non-coding RNAs and is the central component of the basal RNA polymerase II transcription machinery. May play a role in the Mediator complex-dependent regulation of transcription activation. Acts as a negative regulator of transcriptional activation; this repression is relieved by the Mediator complex, which restores Pol II(G) activator-dependent transcription to a level equivalent to that of Pol II. The chain is DNA-directed RNA polymerase II subunit GRINL1A (POLR2M) from Pongo abelii (Sumatran orangutan).